Reading from the N-terminus, the 150-residue chain is Endoribonuclease YbeY (150 aa).

The Zn(2+) site is built by His-115, His-119, and His-125.

It belongs to the endoribonuclease YbeY family. It depends on Zn(2+) as a cofactor.

It localises to the cytoplasm. Its function is as follows. Single strand-specific metallo-endoribonuclease involved in late-stage 70S ribosome quality control and in maturation of the 3' terminus of the 16S rRNA. The protein is Endoribonuclease YbeY of Aquifex aeolicus (strain VF5).